Consider the following 186-residue polypeptide: UPF0200 protein Hbut_0338 (186 aa).

13–20 (GMPGSGKS) serves as a coordination point for ATP.

Belongs to the UPF0200 family.

The polypeptide is UPF0200 protein Hbut_0338 (Hyperthermus butylicus (strain DSM 5456 / JCM 9403 / PLM1-5)).